An 81-amino-acid polypeptide reads, in one-letter code: Putative membrane protein insertion efficiency factor (81 aa).

The segment at 61–81 is disordered; sequence NDGGFDPVPPAPSSRTSSIAE.

This sequence belongs to the UPF0161 family.

It localises to the cell inner membrane. In terms of biological role, could be involved in insertion of integral membrane proteins into the membrane. The protein is Putative membrane protein insertion efficiency factor of Pseudomonas entomophila (strain L48).